A 623-amino-acid chain; its full sequence is tRNA uridine 5-carboxymethylaminomethyl modification enzyme MnmG (623 aa).

12 to 17 contacts FAD; the sequence is GAGHAG. An NAD(+)-binding site is contributed by 272–286; that stretch reads GPRYCPSIEDKINRF.

The protein belongs to the MnmG family. As to quaternary structure, homodimer. Heterotetramer of two MnmE and two MnmG subunits. The cofactor is FAD.

It is found in the cytoplasm. NAD-binding protein involved in the addition of a carboxymethylaminomethyl (cmnm) group at the wobble position (U34) of certain tRNAs, forming tRNA-cmnm(5)s(2)U34. The protein is tRNA uridine 5-carboxymethylaminomethyl modification enzyme MnmG of Flavobacterium psychrophilum (strain ATCC 49511 / DSM 21280 / CIP 103535 / JIP02/86).